A 1511-amino-acid chain; its full sequence is ATP-dependent permease PDR12 (1511 aa).

Basic and acidic residues predominate over residues 1–21 (MSSTDEHIEKDISSRSNHDDD). The disordered stretch occupies residues 1-37 (MSSTDEHIEKDISSRSNHDDDYANSVQSYAASEGQVD). The residue at position 2 (serine 2) is an N-acetylserine. Topologically, residues 2 to 508 (SSTDEHIEKD…RGFQRVKGDS (507 aa)) are cytoplasmic. 3 positions are modified to phosphoserine: serine 32, serine 52, and serine 56. The ABC transporter 1 domain maps to 144 to 397 (IPAHLISKFT…FQRMGWVKPN (254 aa)). Lysine 426 participates in a covalent cross-link: Glycyl lysine isopeptide (Lys-Gly) (interchain with G-Cter in ubiquitin). A helical membrane pass occupies residues 509 to 529 (TYTKVYLSSFLIKALIIGSMF). At 530 to 548 (HKIDDKSQSTTAGAYSRGG) the chain is on the extracellular side. The helical transmembrane segment at 549-569 (MLFYVLLFASVTSLAEIGNSF) threads the bilayer. Residues 570–597 (SSRPVIVKHKSYSMYHLSAESLQEIITE) are Cytoplasmic-facing. A helical transmembrane segment spans residues 598–618 (FPTKFVAIVILCLITYWIPFM). The Extracellular portion of the chain corresponds to 619–622 (KYEA). Residues 623 to 643 (GAFFQYILYLLTVQQCTSFIF) traverse the membrane as a helical segment. The Cytoplasmic portion of the chain corresponds to 644–657 (KFVATMSKSGVDAH). Residues 658–678 (AVGGLWVLMLCVYAGFVLPIG) traverse the membrane as a helical segment. At 679–765 (EMHHWIRWLH…FAYKHAWRNW (87 aa)) the chain is on the extracellular side. A helical membrane pass occupies residues 766–786 (GVNIVWTFGYIVFNVILSEYL). The Cytoplasmic segment spans residues 787–1182 (KPVEGGGDLL…WRSPVYIRAK (396 aa)). The 249-residue stretch at 836–1084 (IAEKDVFTWN…TLLKYFERQS (249 aa)) folds into the ABC transporter 2 domain. Residues 878–885 (GESGAGKT) and 972–979 (AEALVGKT) contribute to the ATP site. A helical transmembrane segment spans residues 1183–1203 (FFECVACALFVGLSYVGVNHS). Position 1204 (valine 1204) is a topological domain, extracellular. A helical transmembrane segment spans residues 1205–1225 (GGAIEAFSSIFMLLLIALAMI). At 1226-1254 (NQLHVFAYDSRELYEVREAASNTFHWSVL) the chain is on the cytoplasmic side. The chain crosses the membrane as a helical span at residues 1255–1275 (LLCHAAVENFWSTLCQFMCFI). Residues 1276–1291 (CYYWPAQFSGRASHAG) are Extracellular-facing. The helical transmembrane segment at 1292-1312 (FFFFFYVLIFPLYFVTYGLWI) threads the bilayer. The Cytoplasmic segment spans residues 1313–1318 (LYMSPD). The helical transmembrane segment at 1319-1339 (VPSASMINSNLFAAMLLFCGI) threads the bilayer. Residues 1340–1444 (LQPREKMPAF…NVKWDHRWRN (105 aa)) are Extracellular-facing. Asparagine 1405 carries N-linked (GlcNAc...) asparagine glycosylation. A helical transmembrane segment spans residues 1445 to 1465 (FGFMWAYICFNIAAMLICYYV). The Cytoplasmic segment spans residues 1466–1511 (VRVKVWSLKSVLNFKKWFNGPRKERHEKDTNIFQTVPGDENKITKK).

It belongs to the ABC transporter superfamily. ABCG family. PDR (TC 3.A.1.205) subfamily.

The protein localises to the cell membrane. In terms of biological role, plasma membrane transporter which mediates resistance to water-soluble, monocarboxylic acids with chain lengths of from C1 to C7 by active extrusion of the preservative anions from the cytosol. Also involved in the export of aromatic and branched-chain organic acids produced in amino acid catabolism. This is ATP-dependent permease PDR12 (PDR12) from Saccharomyces cerevisiae (strain ATCC 204508 / S288c) (Baker's yeast).